The chain runs to 31 residues: Small protein MgtS (31 aa).

The Periplasmic portion of the chain corresponds to 1 to 4; the sequence is MLGN. A helical transmembrane segment spans residues 5 to 25; the sequence is MNVFMAVLGIILFSGFLAAYF. The Cytoplasmic portion of the chain corresponds to 26–31; it reads SHKWDD.

As to quaternary structure, interacts with MgtA.

The protein resides in the cell inner membrane. Modulates intracellular Mg(2+) levels to maintain cellular integrity upon Mg(2+) limitation. Acts by binding and stabilizing the Mg(2+) transporter MgtA, thereby leading to increased intracellular level of Mg(2+). May inhibit FtsH proteolysis of MgtA. The polypeptide is Small protein MgtS (Escherichia coli (strain K12)).